Consider the following 519-residue polypeptide: NADH-quinone oxidoreductase subunit N (519 aa).

14 consecutive transmembrane segments (helical) span residues 22–42 (LLPMLIVFGVACAGVLVEAFV), 53–73 (VLALGGLVAALIAVVSNTGLP), 87–107 (PTLFIQGTILALSIGALLLIA), 141–161 (TEVFPLAMFAVGGMMLFPAAN), 163–183 (LITAFVALEVLSLPLYLLAGM), 198–218 (YFLLGAFSSAFFVYGLALVYG), 242–262 (IIVGLALIGISLLFKLSGVPF), 287–307 (VAAFGALLRVFFVAFGGLAWD), 310–330 (PVIWGVAIATMVVGAILGITQ), 336–356 (LLAYSSIAHAGFVLTAFAATT), 363–383 (VLFYLVAYGFMTIGAFAIVIL), 406–426 (LVAGIFALFLLAMAGLPPTSG), 442–461 (AGPLVIVGVLASAVTAYYYL), and 483–503 (GALASAAIALGVIVTVVLGIV).

It belongs to the complex I subunit 2 family. As to quaternary structure, NDH-1 is composed of 14 different subunits. Subunits NuoA, H, J, K, L, M, N constitute the membrane sector of the complex.

Its subcellular location is the cell membrane. The enzyme catalyses a quinone + NADH + 5 H(+)(in) = a quinol + NAD(+) + 4 H(+)(out). Functionally, NDH-1 shuttles electrons from NADH, via FMN and iron-sulfur (Fe-S) centers, to quinones in the respiratory chain. The immediate electron acceptor for the enzyme in this species is believed to be a menaquinone. Couples the redox reaction to proton translocation (for every two electrons transferred, four hydrogen ions are translocated across the cytoplasmic membrane), and thus conserves the redox energy in a proton gradient. The sequence is that of NADH-quinone oxidoreductase subunit N from Acidothermus cellulolyticus (strain ATCC 43068 / DSM 8971 / 11B).